A 487-amino-acid chain; its full sequence is MTTHYIAGQWLAGQGEALQSLNPVTQAVVWTGQGADAGQVEAAVQAARQAFPGWASLSLEARIGVLEAFAGKLKARAEELAHCIGEETGKPLWESATEVTSMVNKVAISVQSYRERTGEKSGPLADATAVLRHKPHGVVAVFGPYNFPGHLPNGHIVPALLAGNCVVFKPSELTPKVAELTVQCWVEAGLPAGVLNLVQGARETGVALAANPGIDGLFFTGSSRTGNLLHQQFAGRPDKILALEMGGNNPLVVDEVKDLDAAVYTIIQSAFISAGQRCTCARRLLVPQGAWGDSLIQRLVDVSRSISVGAFDQQPAPFMGSVISLQAARALLAAQAELLGKGAVALLEMTQPQADAALLTPGIIDVTAVAGRPDEEFFGPLLQVIRYADFDAAIEEANNTQYGLAAGLLSDSNARYQHFWLRSRAGIVNWNKQLTGAASSAPFGGVGASGNHRASAYYAADYCAYPVASLETASLALPATLTPGVTL.

An NAD(+)-binding site is contributed by 221–226; sequence GSSRTG. Active-site residues include Glu-244 and Cys-278.

The protein belongs to the aldehyde dehydrogenase family. AstD subfamily.

It carries out the reaction N-succinyl-L-glutamate 5-semialdehyde + NAD(+) + H2O = N-succinyl-L-glutamate + NADH + 2 H(+). It functions in the pathway amino-acid degradation; L-arginine degradation via AST pathway; L-glutamate and succinate from L-arginine: step 4/5. Its function is as follows. Catalyzes the NAD-dependent reduction of succinylglutamate semialdehyde into succinylglutamate. The sequence is that of N-succinylglutamate 5-semialdehyde dehydrogenase from Pseudomonas entomophila (strain L48).